A 390-amino-acid chain; its full sequence is 1-deoxy-D-xylulose 5-phosphate reductoisomerase (390 aa).

NADPH contacts are provided by Thr-10, Gly-11, Ser-12, Ile-13, Ala-36, Lys-37, Asn-38, and Asn-122. Position 123 (Lys-123) interacts with 1-deoxy-D-xylulose 5-phosphate. Position 124 (Glu-124) interacts with NADPH. Residue Asp-148 coordinates Mn(2+). Positions 149, 150, 174, and 197 each coordinate 1-deoxy-D-xylulose 5-phosphate. Residue Glu-150 coordinates Mn(2+). Gly-203 lines the NADPH pocket. Residues Ser-210, Asn-215, Lys-216, and Glu-219 each contribute to the 1-deoxy-D-xylulose 5-phosphate site. Glu-219 contacts Mn(2+).

This sequence belongs to the DXR family. Requires Mg(2+) as cofactor. It depends on Mn(2+) as a cofactor.

The catalysed reaction is 2-C-methyl-D-erythritol 4-phosphate + NADP(+) = 1-deoxy-D-xylulose 5-phosphate + NADPH + H(+). It participates in isoprenoid biosynthesis; isopentenyl diphosphate biosynthesis via DXP pathway; isopentenyl diphosphate from 1-deoxy-D-xylulose 5-phosphate: step 1/6. Functionally, catalyzes the NADPH-dependent rearrangement and reduction of 1-deoxy-D-xylulose-5-phosphate (DXP) to 2-C-methyl-D-erythritol 4-phosphate (MEP). The sequence is that of 1-deoxy-D-xylulose 5-phosphate reductoisomerase from Trichlorobacter lovleyi (strain ATCC BAA-1151 / DSM 17278 / SZ) (Geobacter lovleyi).